A 182-amino-acid polypeptide reads, in one-letter code: dTTP/UTP pyrophosphatase (182 aa).

Asp-64 acts as the Proton acceptor in catalysis.

It belongs to the Maf family. YhdE subfamily. A divalent metal cation is required as a cofactor.

It localises to the cytoplasm. The catalysed reaction is dTTP + H2O = dTMP + diphosphate + H(+). It carries out the reaction UTP + H2O = UMP + diphosphate + H(+). Its function is as follows. Nucleoside triphosphate pyrophosphatase that hydrolyzes dTTP and UTP. May have a dual role in cell division arrest and in preventing the incorporation of modified nucleotides into cellular nucleic acids. The protein is dTTP/UTP pyrophosphatase of Thermosipho melanesiensis (strain DSM 12029 / CIP 104789 / BI429).